The primary structure comprises 389 residues: NAD-dependent protein deacetylase sirtuin-2 (389 aa).

Residues 1-34 are disordered; sequence MAEPDPSDPLETQAGKVQEAQDSDSDTEGGATGG. Alanine 2 bears the N-acetylalanine mark. Phosphoserine is present on residues serine 23 and serine 25. A Phosphothreonine modification is found at threonine 27. The Nuclear export signal motif lies at 41–51; sequence LRNLFTQTLGL. Serine 53 is modified (phosphoserine). The Deacetylase sirtuin-type domain maps to 57–338; that stretch reads RLLDELTLEG…LALADLLGWK (282 aa). NAD(+) is bound by residues 85–89 and 95–97; these read AGIST and DFR. Position 100 is a phosphoserine (serine 100). 167-170 lines the NAD(+) pocket; sequence QNID. The active-site Proton acceptor is the histidine 187. Residues cysteine 195, cysteine 200, cysteine 221, and cysteine 224 each contribute to the Zn(2+) site. NAD(+) contacts are provided by residues 262–263, 286–288, and cysteine 324; these read TS and NKE. A disordered region spans residues 350–389; it reads ANIDAQSGSQAPNPSTTISPGKSPPPAKEAARTKEKEEQQ. The span at 353–369 shows a compositional bias: polar residues; it reads DAQSGSQAPNPSTTISP. Residues serine 368 and serine 372 each carry the phosphoserine modification. The span at 378–389 shows a compositional bias: basic and acidic residues; the sequence is EAARTKEKEEQQ.

The protein belongs to the sirtuin family. Class I subfamily. As to quaternary structure, interacts with CDC20, FOXO3 and FZR1. Associates with microtubule in primary cortical mature neurons. Homotrimer. Interacts (via both phosphorylated, unphosphorylated, active or inactive forms) with HDAC6; the interaction is necessary for the complex to interact with alpha-tubulin, suggesting that these proteins belong to a large complex that deacetylates the cytoskeleton. Interacts with FOXO1; the interaction is disrupted upon serum-starvation or oxidative stress, leading to increased level of acetylated FOXO1 and induction of autophagy. Interacts with RELA; the interaction occurs in the cytoplasm and is increased in a TNF-alpha-dependent manner. Interacts with HOXA10; the interaction is direct. Interacts with YWHAB and YWHAG; the interactions occur in a AKT-dependent manner and increase SIRT2-dependent TP53 deacetylation. Interacts with MAPK1/ERK2 and MAPK3/ERK1; the interactions increase SIRT2 stability and deacetylation activity. Interacts (phosphorylated form) with KMT5A isoform 2; the interaction is direct, stimulates KMT5A-mediated methyltransferase activity on histone at 'Lys-20' (H4K20me1) and is increased in a H(2)O(2)-induced oxidative stress-dependent manner. Interacts with G6PD; the interaction is enhanced by H(2)O(2) treatment. Interacts with a G1/S-specific cyclin E-CDK2 complex. Interacts with AURKA, CDK5R1 (p35 form) and CDK5 and HIF1A. Interacts with the tRNA ligase SARS1; recruited to the VEGFA promoter via interaction with SARS1. Isoform 2 and isoform 4 associate with microtubules in primary cortical mature neurons. Interacts with BEX4; negatively regulates alpha-tubulin deacetylation by SIRT2. Zn(2+) is required as a cofactor. Post-translationally, phosphorylated at phosphoserine and phosphothreonine. Phosphorylated at Ser-368 by a mitotic kinase CDK1/cyclin B at the G2/M transition; phosphorylation regulates the delay in cell-cycle progression. Phosphorylated at Ser-368 by a mitotic kinase G1/S-specific cyclin E/Cdk2 complex; phosphorylation inactivates SIRT2-mediated alpha-tubulin deacetylation and thereby negatively regulates cell adhesion, cell migration and neurite outgrowth during neuronal differentiation. Phosphorylated by cyclin A/Cdk2 and p35-Cdk5 complexes and to a lesser extent by the cyclin D3/Cdk4 and cyclin B/Cdk1, in vitro. Dephosphorylated at Ser-368 by CDC14A and CDC14B around early anaphase. Acetylated by EP300; acetylation leads both to the decreased of SIRT2-mediated alpha-tubulin deacetylase activity and SIRT2-mediated down-regulation of TP53 transcriptional activity. In terms of processing, ubiquitinated. As to expression, isoform 1 is weakly expressed in the cortex at postnatal(P) days P1, P3 and P7, and increases progressively between P17 and older adult cortex. Isoform 1 is also expressed in heart, liver and skeletal muscle, weakly expressed in the striatum and spinal cord. Isoform 2 is not expressed in the cortex at P1, P3 and P7, and increases strongly and progressively between P17 and older adult cortex. Isoform 2 is also expressed in the heart, liver, striatum and spinal cord. Isoform 4 is weakly expressed in older adult cortex and spinal cords. Expressed in the cortex. Expressed in postnatal sciatic nerves during myelination and during remyelination after nerve injury. Expressed in neurons, oligodendrocytes, Schwann cells, Purkinje cells and in astrocytes of white matter. Strongly expressed in preadipocytes compared with differentiated adipocytes. Expressed in cerebellar granule cells. Expressed in the inner ear: in the cochlea, expressed in types I and V fibrocytes in the spiral ligament (SL) and slightly in stria vascularis (SV); in the organ of Corti, expressed in some supporting cells; in the crista ampullaris, expressed in spiral ganglion cells; also expressed in the endolymphatic sac (ES) epithelial cells (at protein level). Expressed in the brain, spinal cord, optic nerve and hippocampus. Strongly expressed in 6-8 week-old ovulated meiosis II oocytes and weakly expressed in 45-58 week-old ovulated meiosis II oocytes. Expressed in the cochlea, vestibule and acoustic nerve of the inner ear.

The protein localises to the nucleus. The protein resides in the cytoplasm. Its subcellular location is the perinuclear region. It is found in the perikaryon. It localises to the cytoskeleton. The protein localises to the cell projection. The protein resides in the growth cone. Its subcellular location is the myelin membrane. It is found in the microtubule organizing center. It localises to the centrosome. The protein localises to the spindle. The protein resides in the chromosome. Its subcellular location is the midbody. It is found in the centriole. It catalyses the reaction N(6)-acetyl-L-lysyl-[protein] + NAD(+) + H2O = 2''-O-acetyl-ADP-D-ribose + nicotinamide + L-lysyl-[protein]. The catalysed reaction is N(6)-tetradecanoyl-L-lysyl-[protein] + NAD(+) + H2O = 2''-O-tetradecanoyl-ADP-D-ribose + nicotinamide + L-lysyl-[protein]. It carries out the reaction N(6)-hexadecanoyl-L-lysyl-[protein] + NAD(+) + H2O = 2''-O-hexadecanoyl-ADP-D-ribose + nicotinamide + L-lysyl-[protein]. Its activity is regulated as follows. Inhibited by Sirtinol, A3 and M15 small molecules. Inhibited by nicotinamide. Inhibited by a macrocyclic peptide inhibitor S2iL5. Inhibited by EP300-induced acetylation. Functionally, NAD-dependent protein deacetylase, which deacetylates internal lysines on histone and alpha-tubulin as well as many other proteins such as key transcription factors. Participates in the modulation of multiple and diverse biological processes such as cell cycle control, genomic integrity, microtubule dynamics, cell differentiation, metabolic networks, and autophagy. Plays a major role in the control of cell cycle progression and genomic stability. Functions in the antephase checkpoint preventing precocious mitotic entry in response to microtubule stress agents, and hence allowing proper inheritance of chromosomes. Positively regulates the anaphase promoting complex/cyclosome (APC/C) ubiquitin ligase complex activity by deacetylating CDC20 and FZR1, then allowing progression through mitosis. Associates both with chromatin at transcriptional start sites (TSSs) and enhancers of active genes. Plays a role in cell cycle and chromatin compaction through epigenetic modulation of the regulation of histone H4 'Lys-20' methylation (H4K20me1) during early mitosis. Specifically deacetylates histone H4 at 'Lys-16' (H4K16ac) between the G2/M transition and metaphase enabling H4K20me1 deposition by KMT5A leading to ulterior levels of H4K20me2 and H4K20me3 deposition throughout cell cycle, and mitotic S-phase progression. Deacetylates KMT5A modulating KMT5A chromatin localization during the mitotic stress response. Also deacetylates histone H3 at 'Lys-57' (H3K56ac) during the mitotic G2/M transition. During oocyte meiosis progression, may deacetylate histone H4 at 'Lys-16' (H4K16ac) and alpha-tubulin, regulating spindle assembly and chromosome alignment by influencing microtubule dynamics and kinetochore function. Deacetylates histone H4 at 'Lys-16' (H4K16ac) at the VEGFA promoter and thereby contributes to regulate expression of VEGFA, a key regulator of angiogenesis. Deacetylates alpha-tubulin at 'Lys-40' and hence controls neuronal motility, oligodendroglial cell arbor projection processes and proliferation of non-neuronal cells. Phosphorylation at Ser-368 by a G1/S-specific cyclin E-CDK2 complex inactivates SIRT2-mediated alpha-tubulin deacetylation, negatively regulating cell adhesion, cell migration and neurite outgrowth during neuronal differentiation. Deacetylates PARD3 and participates in the regulation of Schwann cell peripheral myelination formation during early postnatal development and during postinjury remyelination. Involved in several cellular metabolic pathways. Plays a role in the regulation of blood glucose homeostasis by deacetylating and stabilizing phosphoenolpyruvate carboxykinase PCK1 activity in response to low nutrient availability. Acts as a key regulator in the pentose phosphate pathway (PPP) by deacetylating and activating the glucose-6-phosphate G6PD enzyme, and therefore, stimulates the production of cytosolic NADPH to counteract oxidative damage. Maintains energy homeostasis in response to nutrient deprivation as well as energy expenditure by inhibiting adipogenesis and promoting lipolysis. Attenuates adipocyte differentiation by deacetylating and promoting FOXO1 interaction to PPARG and subsequent repression of PPARG-dependent transcriptional activity. Plays a role in the regulation of lysosome-mediated degradation of protein aggregates by autophagy in neuronal cells. Deacetylates FOXO1 in response to oxidative stress or serum deprivation, thereby negatively regulating FOXO1-mediated autophagy. Deacetylates a broad range of transcription factors and co-regulators regulating target gene expression. Deacetylates transcriptional factor FOXO3 stimulating the ubiquitin ligase SCF(SKP2)-mediated FOXO3 ubiquitination and degradation. Deacetylates HIF1A and therefore promotes HIF1A degradation and inhibition of HIF1A transcriptional activity in tumor cells in response to hypoxia. Deacetylates RELA in the cytoplasm inhibiting NF-kappaB-dependent transcription activation upon TNF-alpha stimulation. Inhibits transcriptional activation by deacetylating p53/TP53 and EP300. Also deacetylates EIF5A. Functions as a negative regulator on oxidative stress-tolerance in response to anoxia-reoxygenation conditions. Plays a role as tumor suppressor. In addition to protein deacetylase activity, also has activity toward long-chain fatty acyl groups and mediates protein-lysine demyristoylation and depalmitoylation of target proteins, such as ARF6 and KRAS, thereby regulating their association with membranes. Its function is as follows. Deacetylates alpha-tubulin. The polypeptide is NAD-dependent protein deacetylase sirtuin-2 (Sirt2) (Mus musculus (Mouse)).